Reading from the N-terminus, the 203-residue chain is Guanylate kinase (203 aa).

The region spanning Gly5–Ile183 is the Guanylate kinase-like domain. Ala12–Thr19 is an ATP binding site.

It belongs to the guanylate kinase family.

The protein localises to the cytoplasm. The enzyme catalyses GMP + ATP = GDP + ADP. Functionally, essential for recycling GMP and indirectly, cGMP. This is Guanylate kinase from Geobacter sulfurreducens (strain ATCC 51573 / DSM 12127 / PCA).